The chain runs to 989 residues: Presequence protease, mitochondrial (989 aa).

The N-terminal 16 residues, Met1–Ala16, are a transit peptide targeting the mitochondrion. His84 contacts Zn(2+). Glu87 functions as the Proton acceptor in the catalytic mechanism. His88 provides a ligand contact to Zn(2+). Glu160 is a catalytic residue. Residue Glu185 participates in Zn(2+) binding. At Ser920 the chain carries Phosphoserine. Gly972–Thr979 is an ATP binding site.

The protein belongs to the peptidase M16 family. PreP subfamily. Monomer and homodimer; homodimerization is induced by binding of the substrate. The cofactor is Zn(2+).

It localises to the mitochondrion intermembrane space. The protein localises to the mitochondrion matrix. Its activity is regulated as follows. Activated by nucleotides, including ATP, GTP, CTP, UTP, and ADP. Activated by copper, manganese, calcium and magnesium ions; copper and manganese restore activity following inactivation by EDTA (ethylenediaminetetraacetic acid). Inhibited by metal chelators including EDTA, EGTA (ethylene glycol bis(2-aminoethyl)tetraacetic acid), and 1,10-phenanthroline. Inhibited by copper, zinc, and iron ions. Also inhibited by dithiothreitol p-mercuribenzenesulfonic acid, N-ethylmaleimide, protoporphyrin, hemin, protamine and triarginine. Its function is as follows. Degrades mitochondrial transit peptides after their cleavage in the intermembrane space or in the matrix, and presequence peptides; clearance of these peptides is required to keep the presequence processing machinery running. Preferentially cleaves the N-terminal side of paired basic amino acid residues. Also degrades other unstructured peptides. May function as an ATP-dependent peptidase as opposed to a metalloendopeptidase. This is Presequence protease, mitochondrial from Saccharomyces cerevisiae (strain ATCC 204508 / S288c) (Baker's yeast).